The chain runs to 311 residues: p-hydroxybenzoic acid efflux pump subunit AaeA (311 aa).

The helical transmembrane segment at 11–31 (VGITVLVVVLAVIAIFNVWAF) threads the bilayer.

The protein belongs to the membrane fusion protein (MFP) (TC 8.A.1) family.

The protein resides in the cell inner membrane. In terms of biological role, forms an efflux pump with AaeB. The polypeptide is p-hydroxybenzoic acid efflux pump subunit AaeA (Yersinia pseudotuberculosis serotype O:3 (strain YPIII)).